The sequence spans 380 residues: Crotonobetainyl-CoA reductase (380 aa).

The protein belongs to the acyl-CoA dehydrogenase family. Homotetramer. FAD is required as a cofactor.

Its subcellular location is the cytoplasm. The catalysed reaction is 4-(trimethylamino)butanoyl-CoA + oxidized [electron-transfer flavoprotein] + H(+) = crotonobetainyl-CoA + reduced [electron-transfer flavoprotein]. Its pathway is amine and polyamine metabolism; carnitine metabolism. Functionally, catalyzes the reduction of crotonobetainyl-CoA to gamma-butyrobetainyl-CoA. The polypeptide is Crotonobetainyl-CoA reductase (Shigella flexneri serotype 5b (strain 8401)).